Here is a 374-residue protein sequence, read N- to C-terminus: Coiled-coil domain-containing protein 89 (374 aa).

The disordered stretch occupies residues 1 to 40; it reads MRAPMLQKQQAPRMDTPPPEERLEKQNEKLNNQEEETEFK. Position 16 is a phosphothreonine (T16). Positions 19-32 are enriched in basic and acidic residues; sequence PEERLEKQNEKLNN. A coiled-coil region spans residues 20–351; the sequence is EERLEKQNEK…DELRLQSEAF (332 aa).

Belongs to the CCDC89 family. As to quaternary structure, interacts with HEY1.

It localises to the cytoplasm. Its subcellular location is the nucleus. This Homo sapiens (Human) protein is Coiled-coil domain-containing protein 89 (CCDC89).